The following is a 428-amino-acid chain: Immunoglobulin superfamily member 11 (428 aa).

The signal sequence occupies residues 1 to 22; the sequence is MTRRRSALASWLLLSLLGVAAS. The region spanning 23 to 136 is the Ig-like V-type domain; the sequence is LEVSESPGSV…DRGGRNIGVT (114 aa). The Extracellular segment spans residues 23 to 239; that stretch reads LEVSESPGSV…LQVISPQPRS (217 aa). 2 cysteine pairs are disulfide-bonded: Cys44–Cys120 and Cys165–Cys215. N-linked (GlcNAc...) asparagine glycosylation is present at Asn102. Residues 144 to 234 enclose the Ig-like C2-type domain; it reads PSAPNCQIQG…TCLLDLQVIS (91 aa). Residues 240–260 form a helical membrane-spanning segment; that stretch reads VGVIAGAVGTGAVLIVICLAL. The Cytoplasmic segment spans residues 261-428; it reads TSGAFFYWRS…PAQSRAGSLV (168 aa). Arg375 carries the omega-N-methylarginine modification.

Post-translationally, N-glycosylated.

The protein localises to the cell membrane. Its function is as follows. Functions as a cell adhesion molecule through homophilic interaction. Stimulates cell growth. This chain is Immunoglobulin superfamily member 11 (Igsf11), found in Rattus norvegicus (Rat).